The chain runs to 116 residues: Large ribosomal subunit protein bL17 (116 aa).

It belongs to the bacterial ribosomal protein bL17 family. As to quaternary structure, part of the 50S ribosomal subunit. Contacts protein L32.

This Prochlorococcus marinus (strain MIT 9303) protein is Large ribosomal subunit protein bL17.